Reading from the N-terminus, the 98-residue chain is NADH-ubiquinone oxidoreductase chain 4L (98 aa).

3 consecutive transmembrane segments (helical) span residues 1–21 (MSPIFINITLAFTISLLGMLV), 26–46 (LMASLLCLEGMMMSLFITIAL), and 61–81 (ITLLVFAACETAVGLALLVSI).

The protein belongs to the complex I subunit 4L family. In terms of assembly, core subunit of respiratory chain NADH dehydrogenase (Complex I) which is composed of 45 different subunits.

The protein localises to the mitochondrion inner membrane. It carries out the reaction a ubiquinone + NADH + 5 H(+)(in) = a ubiquinol + NAD(+) + 4 H(+)(out). In terms of biological role, core subunit of the mitochondrial membrane respiratory chain NADH dehydrogenase (Complex I) which catalyzes electron transfer from NADH through the respiratory chain, using ubiquinone as an electron acceptor. Part of the enzyme membrane arm which is embedded in the lipid bilayer and involved in proton translocation. The sequence is that of NADH-ubiquinone oxidoreductase chain 4L (MT-ND4L) from Chlorocebus aethiops (Green monkey).